The sequence spans 587 residues: Prolycopene isomerase 2, chloroplastic (587 aa).

Residues 1-50 (MLCLSLNSSSTSPPKLPLHHSFSRRGIRSWVRSPCVQRKKLGFWSSPKAV) constitute a chloroplast transit peptide.

Belongs to the carotenoid/retinoid oxidoreductase family. CrtISO subfamily. The cofactor is NAD(+). NADP(+) serves as cofactor. FAD is required as a cofactor. Up-regulated in the flower buds and flower lip tissue, while it is weakly expressed in leaves.

The protein resides in the plastid. It is found in the chloroplast membrane. It catalyses the reaction 7,7',9,9'-tetra-cis-lycopene = all-trans-lycopene. It functions in the pathway carotenoid biosynthesis; lycopene biosynthesis. Functionally, carotene cis-trans-isomerase that converts 7,9,9'-tri-cis-neurosporene to 9'-cis-neurosporene and 7,9,9',7'-tetra-cis-lycopene (also known as prolycopene) into all-trans-lycopene. Isomerization requires redox-active components, suggesting that isomerization is achieved by a reversible redox reaction acting at specific double bonds. Isomerizes adjacent cis-double bonds at C7 and C9 pairwise into the trans-configuration, but is incapable of isomerizing single cis-double bonds at C9 and C9'. The protein is Prolycopene isomerase 2, chloroplastic (CRTISO2) of Oncidium hybrid cultivar (Orchid).